A 952-amino-acid chain; its full sequence is UvrABC system protein A (952 aa).

38–45 (GLSGSGKS) is a binding site for ATP. A C4-type zinc finger spans residues 259 to 286 (CDKCGFSISELEPRLFSFNSPLGSCSYC). 2 ABC transporter domains span residues 316 to 595 (FKNI…SNSI) and 615 to 944 (GNGK…QYLS). An ATP-binding site is contributed by 647–654 (GVSGSGKS). Residues 746–772 (CDKCFGDGVIRIEMHFLPDVYVKCEVC) form a C4-type zinc finger.

Belongs to the ABC transporter superfamily. UvrA family. Forms a heterotetramer with UvrB during the search for lesions.

The protein localises to the cytoplasm. Its function is as follows. The UvrABC repair system catalyzes the recognition and processing of DNA lesions. UvrA is an ATPase and a DNA-binding protein. A damage recognition complex composed of 2 UvrA and 2 UvrB subunits scans DNA for abnormalities. When the presence of a lesion has been verified by UvrB, the UvrA molecules dissociate. The protein is UvrABC system protein A of Mycoplasma genitalium (strain ATCC 33530 / DSM 19775 / NCTC 10195 / G37) (Mycoplasmoides genitalium).